A 338-amino-acid polypeptide reads, in one-letter code: GTPase Obg (338 aa).

The Obg domain occupies 1–159 (MSFIDEVKIH…RWLRLELKLM (159 aa)). The OBG-type G domain maps to 160–331 (ADVGLLGMPS…LLDEIARNLW (172 aa)). GTP is bound by residues 166-173 (GMPSVGKS), 191-195 (FTTLK), 213-216 (DIPG), 283-286 (NKID), and 312-314 (SAA). Residues Ser173 and Thr193 each coordinate Mg(2+).

Belongs to the TRAFAC class OBG-HflX-like GTPase superfamily. OBG GTPase family. As to quaternary structure, monomer. The cofactor is Mg(2+).

It is found in the cytoplasm. An essential GTPase which binds GTP, GDP and possibly (p)ppGpp with moderate affinity, with high nucleotide exchange rates and a fairly low GTP hydrolysis rate. Plays a role in control of the cell cycle, stress response, ribosome biogenesis and in those bacteria that undergo differentiation, in morphogenesis control. In Geotalea uraniireducens (strain Rf4) (Geobacter uraniireducens), this protein is GTPase Obg.